Reading from the N-terminus, the 264-residue chain is Carbohydrate deacetylase (264 aa).

Aspartate 20 functions as the Proton acceptor in the catalytic mechanism. The Mg(2+) site is built by aspartate 21, histidine 60, and histidine 127. The active-site Proton donor is the histidine 215.

It belongs to the YdjC deacetylase family. As to quaternary structure, homodimer. Mg(2+) serves as cofactor.

Functionally, probably catalyzes the deacetylation of acetylated carbohydrates an important step in the degradation of oligosaccharides. The sequence is that of Carbohydrate deacetylase from Thermus thermophilus (strain ATCC 27634 / DSM 579 / HB8).